We begin with the raw amino-acid sequence, 326 residues long: Virulence factor CaO19.6688 (326 aa).

Disordered stretches follow at residues 19–91 (FNSL…KLPS), 112–137 (EEDNQEQQLQDGEPLSAPTTNNGTTK), 161–184 (NTTITSSRSNPTNSTPTSNDPSFP), 222–245 (NVGQTPNNNNNNNHGVSETENDLL), and 276–326 (YEYG…PKIK). 3 stretches are compositionally biased toward low complexity: residues 21 to 42 (SLKSSPSSTSSLSSISTSSSSS), 53 to 78 (NRNTSNSQNSSISTAPTTATAANTTP), and 117 to 137 (EQQLQDGEPLSAPTTNNGTTK).

Virulence factor involved in pathogen-host interaction. Modulates host pro-inflammatory cytokine interleukin-1 beta (IL1B) expression. The protein is Virulence factor CaO19.6688 of Candida albicans (strain SC5314 / ATCC MYA-2876) (Yeast).